Reading from the N-terminus, the 260-residue chain is LIM and SH3 domain protein 1 (260 aa).

An N-acetylmethionine modification is found at Met-1. The region spanning 5–56 (CARCCKIVYPTEKVNCLDKFWHKACFHCETCKMTLNMKNYKGYEKKPYCNAH) is the LIM zinc-binding domain. Lys-42 is subject to N6-acetyllysine. Nebulin repeat units lie at residues 61–95 (SFTM…KNKG) and 97–131 (GFSV…KSRM). Residue Thr-68 is modified to Phosphothreonine. Lys-75 is subject to N6-methyllysine. Ser-99 is subject to Phosphoserine. Thr-104 carries the post-translational modification Phosphothreonine. Lys-112 bears the N6-succinyllysine mark. Ser-118 and Ser-134 each carry phosphoserine. The interval 123 to 204 (HEEFEKSRMG…QRSAPGGGGK (82 aa)) is disordered. The segment covering 140-155 (ECERRDPQESSYRRPQ) has biased composition (basic and acidic residues). Residues 171–180 (QQPQQQPAAQ) are compositionally biased toward low complexity. One can recognise an SH3 domain in the interval 201–260 (GGGKRYRAVYDYSAADEDEVSFQDGDTIVNVQQIDDGWMYGTVERTGDTGMLPANYVEAI).

Interacts with F-actin. Interacts with ANKRD54. Interacts with KBTBD10. In terms of processing, phosphorylated.

It localises to the cytoplasm. The protein localises to the cell cortex. Its subcellular location is the cytoskeleton. In terms of biological role, plays an important role in the regulation of dynamic actin-based, cytoskeletal activities. Agonist-dependent changes in LASP1 phosphorylation may also serve to regulate actin-associated ion transport activities, not only in the parietal cell but also in certain other F-actin-rich secretory epithelial cell types. The sequence is that of LIM and SH3 domain protein 1 (LASP1) from Bos taurus (Bovine).